A 555-amino-acid polypeptide reads, in one-letter code: Urocanate hydratase (555 aa).

NAD(+)-binding positions include 52–53 (GG), Q130, 176–178 (GMG), E196, R201, 242–243 (NA), 263–267 (QTSAH), 273–274 (YL), and Y322. Residue C410 is part of the active site. G492 is a binding site for NAD(+).

Belongs to the urocanase family. It depends on NAD(+) as a cofactor.

It localises to the cytoplasm. The catalysed reaction is 4-imidazolone-5-propanoate = trans-urocanate + H2O. The protein operates within amino-acid degradation; L-histidine degradation into L-glutamate; N-formimidoyl-L-glutamate from L-histidine: step 2/3. Catalyzes the conversion of urocanate to 4-imidazolone-5-propionate. This Shewanella baltica (strain OS195) protein is Urocanate hydratase.